Consider the following 116-residue polypeptide: Protein V2 (116 aa).

This sequence belongs to the geminiviridae protein AV2/V2 family. In terms of assembly, interacts with host SGS3.

Its subcellular location is the host cytoplasm. The protein resides in the host perinuclear region. Functionally, through its interaction with host SGS3, acts as a suppressor of RNA-mediated gene silencing, also known as post-transcriptional gene silencing (PTGS), a mechanism of plant viral defense that limits the accumulation of viral RNAs. The protein is Protein V2 of Tomato yellow leaf curl virus (strain Israel) (TYLCV).